We begin with the raw amino-acid sequence, 217 residues long: 3-demethoxyubiquinol 3-hydroxylase (217 aa).

The Fe cation site is built by Glu-66, Glu-96, His-99, Glu-148, Glu-180, and His-183.

This sequence belongs to the COQ7 family. Requires Fe cation as cofactor.

It is found in the cell membrane. It catalyses the reaction a 5-methoxy-2-methyl-3-(all-trans-polyprenyl)benzene-1,4-diol + AH2 + O2 = a 3-demethylubiquinol + A + H2O. It functions in the pathway cofactor biosynthesis; ubiquinone biosynthesis. Its function is as follows. Catalyzes the hydroxylation of 2-nonaprenyl-3-methyl-6-methoxy-1,4-benzoquinol during ubiquinone biosynthesis. This Xanthomonas oryzae pv. oryzae (strain MAFF 311018) protein is 3-demethoxyubiquinol 3-hydroxylase.